The primary structure comprises 664 residues: Macrolide export ATP-binding/permease protein MacB (664 aa).

The 238-residue stretch at 8–245 (LELVDVHRTY…AGPSVPLTLD (238 aa)) folds into the ABC transporter domain. Residue 44 to 51 (GSSGSGKS) coordinates ATP. The next 4 membrane-spanning stretches (helical) occupy residues 283-303 (LLSV…MALG), 543-563 (GAIA…IMLV), 602-622 (IIGI…AGWA), and 627-647 (IVSI…FGLW).

It belongs to the ABC transporter superfamily. Macrolide exporter (TC 3.A.1.122) family. As to quaternary structure, homodimer.

It localises to the cell inner membrane. In terms of biological role, non-canonical ABC transporter that contains transmembrane domains (TMD), which form a pore in the inner membrane, and an ATP-binding domain (NBD), which is responsible for energy generation. Confers resistance against macrolides. In Chlorobium luteolum (strain DSM 273 / BCRC 81028 / 2530) (Pelodictyon luteolum), this protein is Macrolide export ATP-binding/permease protein MacB.